The sequence spans 330 residues: Aspartate--ammonia ligase (330 aa).

Belongs to the class-II aminoacyl-tRNA synthetase family. AsnA subfamily.

The protein localises to the cytoplasm. It catalyses the reaction L-aspartate + NH4(+) + ATP = L-asparagine + AMP + diphosphate + H(+). Its pathway is amino-acid biosynthesis; L-asparagine biosynthesis; L-asparagine from L-aspartate (ammonia route): step 1/1. This chain is Aspartate--ammonia ligase, found in Escherichia coli O139:H28 (strain E24377A / ETEC).